The chain runs to 488 residues: Tripartite motif-containing protein 6 (488 aa).

The segment at 15 to 60 adopts an RING-type zinc-finger fold; sequence CPICLELLTEPLSIDCGHSFCQVCIIGNSNNSVFGQGGRSSCPVCR. The segment at 92-133 adopts a B box-type zinc-finger fold; it reads LEVIFCALHGEKLQLFCKEDGKLICWLCERSQEHRGHHTFLM. Zn(2+)-binding residues include cysteine 97, histidine 100, cysteine 119, and histidine 125. The stretch at 132-223 forms a coiled coil; the sequence is LMEEVAQEYQ…SIIEKAEGDL (92 aa). A B30.2/SPRY domain is found at 282–488; the sequence is DLRKMLKVFR…VPMTLRRPTS (207 aa).

Belongs to the TRIM/RBCC family. Homotrimer. Forms heteromultimers (via B30.2/SPRY domain) with TRIM5. Interacts with MYC. Interacts (via SPRY domain) with IKBKE. Interacts with VAMP8; this interaction contributes to the activation of the type I interferon antiviral response. Interacts with DHX16.

It localises to the cytoplasm. The catalysed reaction is S-ubiquitinyl-[E2 ubiquitin-conjugating enzyme]-L-cysteine + [acceptor protein]-L-lysine = [E2 ubiquitin-conjugating enzyme]-L-cysteine + N(6)-ubiquitinyl-[acceptor protein]-L-lysine.. The protein operates within protein modification; protein ubiquitination. Functionally, E3 ubiquitin ligase that plays a crucial role in the activation of the IKBKE-dependent branch of the type I interferon signaling pathway. In concert with the ubiquitin-conjugating E2 enzyme UBE2K, synthesizes unanchored 'Lys-48'-linked polyubiquitin chains that promote the oligomerization and autophosphorylation of IKBKE leading to stimulation of an antiviral response. Also ubiquitinates MYC and inhibits its transcription activation activity, maintaining the pluripotency of embryonic stem cells. Promotes the association of unanchored 'Lys-48'-polyubiquitin chains with DHX16 leading to enhancement of RIGI-mediated innate antiviral immune response. The sequence is that of Tripartite motif-containing protein 6 (Trim6) from Mus musculus (Mouse).